A 350-amino-acid polypeptide reads, in one-letter code: Outer membrane porin PhoE (350 aa).

Residues 1–21 (MKKSTLALVVMGVVASASVHA) form the signal peptide.

Belongs to the Gram-negative porin family. Homotrimer.

It localises to the cell outer membrane. Uptake of inorganic phosphate, phosphorylated compounds, and some other negatively charged solutes. This chain is Outer membrane porin PhoE (phoE), found in Enterobacter cloacae.